The chain runs to 180 residues: Telokin-like protein 20 (180 aa).

Positions 112 to 180 are disordered; that stretch reads SKTDAAVHTS…KQKLDNAKQD (69 aa). Positions 156 to 165 are enriched in acidic residues; the sequence is DFEENIDDGD.

This Lepidoptera (butterflies and moths) protein is Telokin-like protein 20 (TLP20).